Consider the following 389-residue polypeptide: Innexin-6 (389 aa).

The next 4 helical transmembrane spans lie at Val36 to Ile56, Val111 to Ala131, Leu190 to Leu210, and Leu276 to Phe296.

Belongs to the pannexin family.

Its subcellular location is the cell membrane. The protein localises to the cell junction. The protein resides in the gap junction. Functionally, structural component of the gap junctions. The protein is Innexin-6 (inx-6) of Caenorhabditis elegans.